The sequence spans 86 residues: EMBRYO SURROUNDING FACTOR 1-like protein 2 (86 aa).

The N-terminal stretch at 1 to 21 (MKSHIAIICIIMLSFFSMHEY) is a signal peptide. Disulfide bonds link Cys39/Cys54, Cys44/Cys82, Cys52/Cys78, and Cys55/Cys65.

Belongs to the MEG family.

The polypeptide is EMBRYO SURROUNDING FACTOR 1-like protein 2 (ESFL2) (Arabidopsis thaliana (Mouse-ear cress)).